A 1733-amino-acid chain; its full sequence is ATP-binding cassette sub-family A member 17 (1733 aa).

The next 7 membrane-spanning stretches (helical) occupy residues 22–42 (TLIT…VLYL), 262–282 (FPLL…NSVL), 306–326 (AWFI…TVLF), 342–362 (TLIF…AFMM), 372–392 (GTVI…YITF), 403–423 (ILSC…ISLF), and 444–464 (FAQV…IAFL). The region spanning 519-752 (IEIQHLYKVF…YGAGYYMTII (234 aa)) is the ABC transporter 1 domain. 555–562 (GHNGAGKT) serves as a coordination point for ATP. N609 carries an N-linked (GlcNAc...) asparagine glycan. 7 helical membrane-spanning segments follow: residues 906-926 (LVLS…LTFF), 1082-1102 (LVVN…ILTV), 1128-1148 (LLWD…VFLW), 1160-1180 (IPAV…LVYT), 1192-1212 (CVKL…LVTV), 1230-1250 (IFLI…YYNF), and 1287-1307 (IGKY…MLFL). Positions 1366–1599 (LVVKEVSKVY…FGISYSLQAK (234 aa)) constitute an ABC transporter 2 domain. Residue 1401–1408 (GLNGAGKT) coordinates ATP. Positions 1681–1692 (ESSTKEQIQQEQ) are enriched in polar residues. The tract at residues 1681–1733 (ESSTKEQIQQEQAVLASPSPPSNSRPISSPPSRLSSPTPKPLPSPPPSEPILL) is disordered. The segment covering 1704–1717 (SRPISSPPSRLSSP) has biased composition (low complexity). Residues 1718–1733 (TPKPLPSPPPSEPILL) are compositionally biased toward pro residues.

The protein belongs to the ABC transporter superfamily. ABCA family. Post-translationally, N-glycosylated. In terms of tissue distribution, in the testis, detected predominantly in elongated spermatids at the late stage of germ cell development and in sperm, with no expression detected in immature germ cells such as spermatogonia and spermatocytes or in somatic cells such as Sertoli cells (at protein level). Expressed in the head and tail midpiece of elongated spermatids and sperm (at protein level). Expressed exclusively in the testis.

It is found in the endoplasmic reticulum membrane. The protein localises to the cytoplasm. The catalysed reaction is cholesterol(in) + ATP + H2O = cholesterol(out) + ADP + phosphate + H(+). Promotes cholesterol efflux from sperm which renders sperm capable of fertilization. Has also been shown to decrease levels of intracellular esterified neutral lipids including cholesteryl esters, fatty acid esters and triacylglycerols. This chain is ATP-binding cassette sub-family A member 17, found in Mus musculus (Mouse).